The sequence spans 274 residues: NH(3)-dependent NAD(+) synthetase (274 aa).

46 to 53 (GISGGQDS) is a binding site for ATP. Position 52 (aspartate 52) interacts with Mg(2+). Arginine 140 provides a ligand contact to deamido-NAD(+). Residue threonine 160 coordinates ATP. Glutamate 165 is a binding site for Mg(2+). Residues lysine 173 and aspartate 180 each contribute to the deamido-NAD(+) site. Residues lysine 189 and threonine 211 each contribute to the ATP site. 260 to 261 (HK) serves as a coordination point for deamido-NAD(+).

It belongs to the NAD synthetase family. In terms of assembly, homodimer.

The catalysed reaction is deamido-NAD(+) + NH4(+) + ATP = AMP + diphosphate + NAD(+) + H(+). It functions in the pathway cofactor biosynthesis; NAD(+) biosynthesis; NAD(+) from deamido-NAD(+) (ammonia route): step 1/1. Functionally, catalyzes the ATP-dependent amidation of deamido-NAD to form NAD. Uses ammonia as a nitrogen source. This chain is NH(3)-dependent NAD(+) synthetase, found in Streptococcus equi subsp. zooepidemicus (strain H70).